Reading from the N-terminus, the 444-residue chain is L-cysteine:1D-myo-inositol 2-amino-2-deoxy-alpha-D-glucopyranoside ligase (444 aa).

Residues 1 to 13 (MPCDRKTSPDQHH) show a composition bias toward basic and acidic residues. The disordered stretch occupies residues 1-21 (MPCDRKTSPDQHHALQIHRHH). Residue Cys75 coordinates Zn(2+). L-cysteinyl-5'-AMP contacts are provided by residues 75 to 78 (CGIT), Thr90, and 113 to 115 (NIT). The short motif at 77-87 (ITPYDATHLGH) is the 'HIGH' region element. The 'ERGGDP' region signature appears at 219-224 (ERGGDP). An L-cysteinyl-5'-AMP-binding site is contributed by Trp259. Residue Cys263 coordinates Zn(2+). Residue 281-283 (GSD) participates in L-cysteinyl-5'-AMP binding. Residue His288 participates in Zn(2+) binding. Ile315 is an L-cysteinyl-5'-AMP binding site. The 'KMSKS' region motif lies at 321 to 325 (KMSKS).

It belongs to the class-I aminoacyl-tRNA synthetase family. MshC subfamily. In terms of assembly, monomer. Zn(2+) is required as a cofactor.

The catalysed reaction is 1D-myo-inositol 2-amino-2-deoxy-alpha-D-glucopyranoside + L-cysteine + ATP = 1D-myo-inositol 2-(L-cysteinylamino)-2-deoxy-alpha-D-glucopyranoside + AMP + diphosphate + H(+). In terms of biological role, catalyzes the ATP-dependent condensation of GlcN-Ins and L-cysteine to form L-Cys-GlcN-Ins. This Mycolicibacterium gilvum (strain PYR-GCK) (Mycobacterium gilvum (strain PYR-GCK)) protein is L-cysteine:1D-myo-inositol 2-amino-2-deoxy-alpha-D-glucopyranoside ligase.